Consider the following 727-residue polypeptide: MSKTVVLAEKPSVGRDLARVLKCHKKGNGYLEGDQYIVTWALGHLVTLADPEGYGKEFQSWRLEDLPIIPEPLKLVVIKKTGKQFNAVKSQLTRKDVNQIVIATDAGREGELVARWIIEKANVRKPIKRLWISSVTDKAIKEGFQKLRSGKEYENLYHSAVARAEADWIVGINATRALTTKFNAQLSCGRVQTPTLAMIAKREADIQAFTPVPYYGIRAAVDGMTLTWQDKKSKQTRTFNQDVTSRLLKNLQGKQAVVAELKKTAKKSFAPALYDLTELQRDAHKRFGFSAKETLSVLQKLYEQHKLVTYPRTDSRFLSSDIVPTLKDRLEGMEVKPYAQYVSQIKKRGIKSHKGYVNDAKVSDHHAIIPTEEPLVLSSLSDKERKLYDLIAKRFLAVLMPAFEYEETKVIAEIGGETFTAKGKTVQSQGWKAVYDMAEEDDEQEDDRDQTLPALQKGDTLAVRTLTETSGQTKPPARFNEGTLLSAMENPSAFMQGEEKGLVKTLGETGGLGTVATRADIIEKLFNSFLIEKKGQDIFITSKGKQLLQLVPEDLKSPALTAEWEQKLSAIAAGKLKSAVFIKDMKAYAHQTVKEIKNSSQTFRHDNITGTACPECGKMMLKVNGKRGTMLVCQDRECGSRKTIARKTNARCPNCHKRMELRGQGEGQTFACVCGHREKLSVFEKRKNKDKARATKRDVSSYMKKQNKDEPINNALAEQLKKLGLDK.

Positions 3–136 (KTVVLAEKPS…IKRLWISSVT (134 aa)) constitute a Toprim domain. 2 residues coordinate Mg(2+): glutamate 9 and aspartate 105. In terms of domain architecture, Topo IA-type catalytic spans 153 to 593 (YENLYHSAVA…DMKAYAHQTV (441 aa)). The tract at residues 187 to 192 (SCGRVQ) is interaction with DNA. Catalysis depends on tyrosine 310, which acts as the O-(5'-phospho-DNA)-tyrosine intermediate. The span at 685 to 699 (KRKNKDKARATKRDV) shows a compositional bias: basic and acidic residues. The segment at 685–714 (KRKNKDKARATKRDVSSYMKKQNKDEPINN) is disordered.

The protein belongs to the type IA topoisomerase family. It depends on Mg(2+) as a cofactor.

The catalysed reaction is ATP-independent breakage of single-stranded DNA, followed by passage and rejoining.. Releases the supercoiling and torsional tension of DNA, which is introduced during the DNA replication and transcription, by transiently cleaving and rejoining one strand of the DNA duplex. Introduces a single-strand break via transesterification at a target site in duplex DNA. The scissile phosphodiester is attacked by the catalytic tyrosine of the enzyme, resulting in the formation of a DNA-(5'-phosphotyrosyl)-enzyme intermediate and the expulsion of a 3'-OH DNA strand. The free DNA strand then undergoes passage around the unbroken strand, thus removing DNA supercoils. Finally, in the religation step, the DNA 3'-OH attacks the covalent intermediate to expel the active-site tyrosine and restore the DNA phosphodiester backbone. In Bacillus subtilis (strain 168), this protein is DNA topoisomerase 3.